A 225-amino-acid chain; its full sequence is THAP domain-containing protein 1 B (225 aa).

Residues 5–57 form a THAP-type zinc finger; the sequence is CSAYGCKNRYDKDRPISFHKFPLKRPLLCKKWEAAVRRADFKPTKYSSICSDH. Positions 139–194 form a coiled coil; that stretch reads VEDTVHQRRRIQQLEEQVDKLRKKLKIANQKCRRQERSLEKLEKEVSEYREAKGSG.

The protein belongs to the THAP1 family.

Its subcellular location is the nucleus. It localises to the nucleoplasm. Its function is as follows. DNA-binding transcription regulator that regulates endothelial cell proliferation and G1/S cell-cycle progression. Specifically binds the 5'-[AT]NTNN[GT]GGCA[AGT]-3' core DNA sequence and acts by modulating expression of pRB-E2F cell-cycle target genes. The sequence is that of THAP domain-containing protein 1 B (thap1-b) from Xenopus laevis (African clawed frog).